Here is a 459-residue protein sequence, read N- to C-terminus: Disease resistance protein CHL1 (459 aa).

The region spanning 16–170 is the TIR domain; that stretch reads REVDVFLSFC…QIARDISLVV (155 aa). E89 is an active-site residue. The NB-ARC domain maps to 191–401; it reads VYDLLALEVN…LLKLKAKQGG (211 aa). Residues 429–440 show a composition bias toward basic and acidic residues; that stretch reads ERKESSQDKSQQ. The segment at 429 to 459 is disordered; it reads ERKESSQDKSQQESEVAADILIGKESSQDKQ.

In terms of tissue distribution, mostly expressed in leaves, stems and roots, and, to a lower extent, in flowers and siliques.

It localises to the cytoplasm. The enzyme catalyses NAD(+) + H2O = ADP-D-ribose + nicotinamide + H(+). Its function is as follows. Confers resistance to low temperatures by limiting chloroplast damage and cell death, thus maintaining growth homeostasis. The sequence is that of Disease resistance protein CHL1 from Arabidopsis thaliana (Mouse-ear cress).